The chain runs to 213 residues: Transmembrane emp24 domain-containing protein p24delta8 (213 aa).

The N-terminal stretch at 1–22 (MDLCRSSILLLIIALLSPRTLS) is a signal peptide. At 23–180 (MRYELKSSKT…QELNRSTNSK (158 aa)) the chain is on the lumenal side. In terms of domain architecture, GOLD spans 32–148 (TKCIGEEIHE…VDMMEYQVKT (117 aa)). The N-linked (GlcNAc...) asparagine glycan is linked to Asn-97. A coiled-coil region spans residues 163 to 176 (LREREEEMQELNRS). Position 166 is an omega-N-methylated arginine (Arg-166). N-linked (GlcNAc...) asparagine glycosylation is present at Asn-174. A helical transmembrane segment spans residues 181–203 (MAWLSFGSLVVCLSVAGLQFWHL). Residues 202–213 (HLKTFFEKKKLI) form an interaction with ARF1 region. Residues 204–213 (KTFFEKKKLI) are Cytoplasmic-facing. The COPII vesicle coat-binding motif lies at 206 to 207 (FF). Residues 206–213 (FFEKKKLI) carry the COPI vesicle coat-binding motif.

The protein belongs to the EMP24/GP25L family. As to quaternary structure, probably oligomerizes with other members of the EMP24/GP25L family. Associates with the COPI vesicle coat (coatomer). Associates with the COPII vesicle coat (coatomer). Interacts with ARF1 (GDP-bound).

It localises to the endoplasmic reticulum membrane. The protein localises to the golgi apparatus. Its subcellular location is the cis-Golgi network membrane. The protein resides in the golgi stack membrane. Its function is as follows. Involved in vesicular protein trafficking. Mainly functions in the early secretory pathway. Thought to act as cargo receptor at the lumenal side for incorporation of secretory cargo molecules into transport vesicles and to be involved in vesicle coat formation at the cytoplasmic side. On Golgi membranes, acts as a primary receptor for ARF1-GDP which is involved in COPI-vesicle formation. The protein is Transmembrane emp24 domain-containing protein p24delta8 of Arabidopsis thaliana (Mouse-ear cress).